Reading from the N-terminus, the 202-residue chain is MAPIFRSTSLIAFSLFFFFFASTLPISSGSEDSYTITGRVRVPASTVIGHAAKFSNIKVILNGGQHVTFLRPDGYFTFHKVPAGTHLIEVYALGYFFSPVRVDVSARHRGKVQATLTETRRSLTELVLEPLRAEQYYEMREPFSVMSIVKSPMGLMVGFMVVVVFLMPKLMENIDPEEMKSAQEQMRSQGVPSLTSLLPASR.

The first 23 residues, 1–23 (MAPIFRSTSLIAFSLFFFFFAST), serve as a signal peptide directing secretion. Residues 148–168 (IVKSPMGLMVGFMVVVVFLMP) form a helical membrane-spanning segment. The segment at 179 to 202 (MKSAQEQMRSQGVPSLTSLLPASR) is disordered. Over residues 182–202 (AQEQMRSQGVPSLTSLLPASR) the composition is skewed to polar residues.

The protein belongs to the EMC7 family.

The protein resides in the membrane. The chain is ER membrane protein complex subunit 7 homolog from Arabidopsis thaliana (Mouse-ear cress).